The primary structure comprises 232 residues: Membrane steroid-binding protein 1 (232 aa).

The chain crosses the membrane as a helical span at residues 25–45 (AAFFTAVAAAAALYHVVSGIF). 2 disordered regions span residues 48–77 (PPPPPPPRPRDEPEAEPLPPPVQLGEVSEE) and 172–232 (TVPV…AKES). One can recognise a Cytochrome b5 heme-binding domain in the interval 71-170 (LGEVSEEELR…GKYVKVGTVK (100 aa)). Residues 73–170 (EVSEEELRQY…GKYVKVGTVK (98 aa)) form a steroid-binding region. Residues 179-193 (APSTSPETTETAAAA) show a composition bias toward low complexity. Residues 194–219 (EPEKAPATEEKPREVSSEEVKEKEDA) are compositionally biased toward basic and acidic residues.

The protein belongs to the cytochrome b5 family. MAPR subfamily. Interacts with SERL2. Expressed in leaf sheaths, leaf blades and panicles.

The protein resides in the cell membrane. Its function is as follows. Binds multiple steroid compounds. May act as a coreceptor with SERL2 and enhance its endocytosis. This is Membrane steroid-binding protein 1 from Oryza sativa subsp. japonica (Rice).